Reading from the N-terminus, the 593-residue chain is F-box/LRR-repeat protein 17 (593 aa).

Residues 120–177 form the F-box domain; that stretch reads DLDLQLDTDIVQPGRFHAVGLWEVLKRLPPSSLLMAARVCKGWRETSRKMWKAAEELR. 9 LRR repeats span residues 178-206, 207-232, 237-262, 276-304, 335-361, 362-387, 414-439, 477-502, and 503-525; these read IRVPERAQIGYIGSLLQKCPRLIRLSLKI, ESDFDATTLACIAFSCPNLEVLEITT, VNRISGDELSRFVANKRGLTSLKMEG, LSTLWLSDLHSLSKMIFNCPNLTEISLEF, SLKLSHTVVLSLTAVNFRYLRMLSLVL, GINITDASVAAISSGYKNLELLDLSG, CPNITSSGIQFATAQLPLLELMDCGM, LSLWGCSSLDALFLNCPELMDLNLNL, and CSNLHPESLVLQCPKLQLVYASG.

Part of a SCF (ASK-cullin-F-box) protein ligase complex. Interacts with SKP1A/ASK1, KRP4, KRP6 and KRP7. As to expression, expressed in developing pollen.

The protein localises to the nucleus. Its pathway is protein modification; protein ubiquitination. Its function is as follows. Essential protein for male fertility. Component of the SCF(ASK-cullin-F-box) E3 ubiquitin ligase complex SCF(FBL17), which mediates the ubiquitination and subsequent proteasomal degradation of target proteins. Enables the switch in cell cycle control leading to male germ cell lineage formation from microspores after meiosis. Targets CDKA-1 inhibitors the degradation specifically in male germ cells (e.g. KRP6 and KRP7) and thus enables CDKA-1 activation and germ cell S-phase progression. Promotes twin sperm cell production and double fertilization. This chain is F-box/LRR-repeat protein 17 (FBL17), found in Arabidopsis thaliana (Mouse-ear cress).